The sequence spans 217 residues: MLO-like protein (217 aa).

A run of 3 helical transmembrane segments spans residues 35–55, 59–79, and 119–139; these read FKVV…FLLS, GWVA…VVGT, and LVLF…AFFI.

It belongs to the MLO family.

It is found in the membrane. Its function is as follows. May be involved in modulation of pathogen defense and leaf cell death. In Linum usitatissimum (Flax), this protein is MLO-like protein.